Here is a 130-residue protein sequence, read N- to C-terminus: Small ribosomal subunit protein uS8 (130 aa).

The protein belongs to the universal ribosomal protein uS8 family. In terms of assembly, part of the 30S ribosomal subunit. Contacts proteins S5 and S12.

Its function is as follows. One of the primary rRNA binding proteins, it binds directly to 16S rRNA central domain where it helps coordinate assembly of the platform of the 30S subunit. In Acidiphilium cryptum (strain JF-5), this protein is Small ribosomal subunit protein uS8.